Consider the following 67-residue polypeptide: Protein AaeX (67 aa).

The next 2 helical transmembrane spans lie at 3–23 (LFPV…ELIL) and 43–63 (FVWH…YLIS).

Belongs to the AaeX family.

Its subcellular location is the cell membrane. The protein is Protein AaeX of Enterobacter sp. (strain 638).